The chain runs to 340 residues: DNA-directed RNA polymerase subunit alpha (340 aa).

The alpha N-terminal domain (alpha-NTD) stretch occupies residues 1–233; sequence MIQDEIPIPV…DLFIIFLNME (233 aa). An alpha C-terminal domain (alpha-CTD) region spans residues 264–340; the sequence is AKEVAFKQIF…QLPKDQFNIS (77 aa).

It belongs to the RNA polymerase alpha chain family. As to quaternary structure, in plastids the minimal PEP RNA polymerase catalytic core is composed of four subunits: alpha, beta, beta', and beta''. When a (nuclear-encoded) sigma factor is associated with the core the holoenzyme is formed, which can initiate transcription.

The protein localises to the plastid. Its subcellular location is the chloroplast. The enzyme catalyses RNA(n) + a ribonucleoside 5'-triphosphate = RNA(n+1) + diphosphate. Its function is as follows. DNA-dependent RNA polymerase catalyzes the transcription of DNA into RNA using the four ribonucleoside triphosphates as substrates. The chain is DNA-directed RNA polymerase subunit alpha from Psilotum nudum (Whisk fern).